The following is a 145-amino-acid chain: Large ribosomal subunit protein uL15 (145 aa).

Residues 20 to 54 (GRGMASGKGKTATRGHKGQNSRSGGGVRPGFEGGQ) are disordered. Over residues 42–52 (SGGGVRPGFEG) the composition is skewed to gly residues.

This sequence belongs to the universal ribosomal protein uL15 family. Part of the 50S ribosomal subunit.

In terms of biological role, binds to the 23S rRNA. The protein is Large ribosomal subunit protein uL15 of Mycoplasma mycoides subsp. mycoides SC (strain CCUG 32753 / NCTC 10114 / PG1).